The sequence spans 525 residues: Chromosomal replication initiator protein DnaA (525 aa).

The interval M1–T71 is domain I, interacts with DnaA modulators. Positions T71–S188 are domain II. The segment at A160–A181 is disordered. The segment covering P169–A181 has biased composition (low complexity). A domain III, AAA+ region region spans residues K189 to S405. G233, G235, K236, and T237 together coordinate ATP. A domain IV, binds dsDNA region spans residues K406–G525.

Belongs to the DnaA family. In terms of assembly, oligomerizes as a right-handed, spiral filament on DNA at oriC.

The protein localises to the cytoplasm. Its function is as follows. Plays an essential role in the initiation and regulation of chromosomal replication. ATP-DnaA binds to the origin of replication (oriC) to initiate formation of the DNA replication initiation complex once per cell cycle. Binds the DnaA box (a 9 base pair repeat at the origin) and separates the double-stranded (ds)DNA. Forms a right-handed helical filament on oriC DNA; dsDNA binds to the exterior of the filament while single-stranded (ss)DNA is stabiized in the filament's interior. The ATP-DnaA-oriC complex binds and stabilizes one strand of the AT-rich DNA unwinding element (DUE), permitting loading of DNA polymerase. After initiation quickly degrades to an ADP-DnaA complex that is not apt for DNA replication. Binds acidic phospholipids. The polypeptide is Chromosomal replication initiator protein DnaA (Burkholderia vietnamiensis (strain G4 / LMG 22486) (Burkholderia cepacia (strain R1808))).